Here is a 98-residue protein sequence, read N- to C-terminus: Small ribosomal subunit protein bS6 (98 aa).

It belongs to the bacterial ribosomal protein bS6 family.

Binds together with bS18 to 16S ribosomal RNA. This Lactobacillus johnsonii (strain CNCM I-12250 / La1 / NCC 533) protein is Small ribosomal subunit protein bS6.